We begin with the raw amino-acid sequence, 739 residues long: Phosphoribosylformylglycinamidine synthase subunit PurL (739 aa).

The active site involves His-54. Positions 57 and 96 each coordinate ATP. Residue Glu-98 coordinates Mg(2+). Substrate-binding positions include 99-102 (SHNH) and Arg-121. His-100 serves as the catalytic Proton acceptor. Position 122 (Asp-122) interacts with Mg(2+). Substrate is bound at residue Gln-245. Asp-273 is a Mg(2+) binding site. Substrate is bound at residue 317–319 (ESQ). ATP-binding residues include Asp-500 and Gly-537. Asn-538 is a Mg(2+) binding site. Position 540 (Ser-540) interacts with substrate.

Belongs to the FGAMS family. In terms of assembly, monomer. Part of the FGAM synthase complex composed of 1 PurL, 1 PurQ and 2 PurS subunits.

The protein resides in the cytoplasm. The catalysed reaction is N(2)-formyl-N(1)-(5-phospho-beta-D-ribosyl)glycinamide + L-glutamine + ATP + H2O = 2-formamido-N(1)-(5-O-phospho-beta-D-ribosyl)acetamidine + L-glutamate + ADP + phosphate + H(+). It participates in purine metabolism; IMP biosynthesis via de novo pathway; 5-amino-1-(5-phospho-D-ribosyl)imidazole from N(2)-formyl-N(1)-(5-phospho-D-ribosyl)glycinamide: step 1/2. Part of the phosphoribosylformylglycinamidine synthase complex involved in the purines biosynthetic pathway. Catalyzes the ATP-dependent conversion of formylglycinamide ribonucleotide (FGAR) and glutamine to yield formylglycinamidine ribonucleotide (FGAM) and glutamate. The FGAM synthase complex is composed of three subunits. PurQ produces an ammonia molecule by converting glutamine to glutamate. PurL transfers the ammonia molecule to FGAR to form FGAM in an ATP-dependent manner. PurS interacts with PurQ and PurL and is thought to assist in the transfer of the ammonia molecule from PurQ to PurL. The polypeptide is Phosphoribosylformylglycinamidine synthase subunit PurL (Bacillus mycoides (strain KBAB4) (Bacillus weihenstephanensis)).